The chain runs to 190 residues: Photosynthetic NDH subunit of lumenal location 2, chloroplastic (190 aa).

Residues 1 to 31 constitute a chloroplast transit peptide; that stretch reads MSSFTTTNTPPPYLLRKIYHRRVNQPFSVVC. A thylakoid-targeting transit peptide spans 32–68; that stretch reads CTGEPQQDIFTRRRTLTSLITFTVIGGATSSALAQEK. Coiled coils occupy residues 87–107 and 139–159; these read EDAAARIKQTAEGLRDMREML and ESRRNDYVQAANELVENMSEL.

This sequence belongs to the PsbQ family. In terms of assembly, part of the chloroplast NDH complex, composed of a mixture of chloroplast and nucleus encoded subunits. Component of the NDH lumenal subcomplex, at least composed of PnsL1, PnsL2, PnsL3, PnsL4 and PnsL5.

It is found in the plastid. Its subcellular location is the chloroplast thylakoid membrane. In terms of biological role, NDH shuttles electrons from NAD(P)H:plastoquinone, via FMN and iron-sulfur (Fe-S) centers, to quinones in the photosynthetic chain and possibly in a chloroplast respiratory chain. The immediate electron acceptor for the enzyme in this species is believed to be plastoquinone. Couples the redox reaction to proton translocation, and thus conserves the redox energy in a proton gradient. Required for both formation and activity of the chloroplast NAD(P)H dehydrogenase (NDH) complex. This Arabidopsis thaliana (Mouse-ear cress) protein is Photosynthetic NDH subunit of lumenal location 2, chloroplastic.